The sequence spans 344 residues: Ureide permease 3 (344 aa).

Over 1-10 the chain is Extracellular; that stretch reads MYVIESKGGT. Residues 11-31 traverse the membrane as a helical segment; that stretch reads ITCMLLALLFLGTWPAIMTLT. The Cytoplasmic portion of the chain corresponds to 32–42; the sequence is ERRGRLPQHTY. Residues 43–63 traverse the membrane as a helical segment; that stretch reads LDYTLTNLLAAVIIAFTLGEI. The Extracellular segment spans residues 64 to 78; sequence SPSRPNFTTQLSQDN. A helical membrane pass occupies residues 79–99; the sequence is WPSVMFAMAGGIFLSLGTLAT. Residues 100–101 lie on the Cytoplasmic side of the membrane; it reads QY. A helical membrane pass occupies residues 102–122; it reads AWAFVGLSVTEVITASIAVVI. Residues 123 to 136 are Extracellular-facing; it reads GTTLNYFLDDRINR. The chain crosses the membrane as a helical span at residues 137 to 157; it reads AEVLFPGVACFLIAVCFGSAV. Residues 158–208 are Cytoplasmic-facing; sequence HKSNAADNKSKLQGFKSLETTSSFQMETSSIKEGKAKVGTADFLIEVEKQR. 209 to 216 lines the ATP pocket; sequence AIKVFGKS. Residues 209 to 229 traverse the membrane as a helical segment; it reads AIKVFGKSTIIGLAITFFAVP. Topologically, residues 230–235 are extracellular; it reads KLNVYT. A helical membrane pass occupies residues 236–256; that stretch reads AFFYFSISSFGVGLILNIIFL. The Cytoplasmic segment spans residues 257–278; it reads YWPILGLPRSSFKAYLNDWNGR. A helical membrane pass occupies residues 279–299; the sequence is GWSFLAGFLCGFGNGLQFMGG. The Extracellular segment spans residues 300-344; sequence QAAGYAAAGAVQIENKHFGGYCCLENTKDHQEKHIHFLSVCYLCS.

This sequence belongs to the plant ureide permease (TC 2.A.7.19) family.

It localises to the membrane. In terms of biological role, proton-coupled transporter that transports a wide spectrum of oxo derivatives of heterocyclic nitrogen compounds. This chain is Ureide permease 3, found in Arabidopsis thaliana (Mouse-ear cress).